The following is a 695-amino-acid chain: Protein MALE DISCOVERER 1 (695 aa).

Positions 1–29 (MGCRWNPIGFQFSCFMFLIITLQSRSSLS) are cleaved as a signal peptide. Residues 30–340 (LESEGFVLLK…SKGFKDVWLY (311 aa)) lie on the Extracellular side of the membrane. N-linked (GlcNAc...) asparagine glycans are attached at residues N56 and N80. LRR repeat units follow at residues 75–98 (KVQM…SQLS), 99–121 (ELRS…FASF), 123–144 (KLEF…ELNK), and 147–168 (TPEN…KFLR). N-linked (GlcNAc...) asparagine glycosylation occurs at N247. Residues 302 to 325 (PPLIPPSSPPPLPTNNTIASDPPR) are disordered. Pro residues predominate over residues 303–314 (PLIPPSSPPPLP). N-linked (GlcNAc...) asparagine glycosylation is present at N316. A helical transmembrane segment spans residues 341–361 (VVIGVAAFVAMLIIVAVIFFF). At 362–695 (RKRAVKSIGP…ELEILSSEAT (334 aa)) the chain is on the cytoplasmic side. Positions 363–668 (KRAVKSIGPW…YVVQQLKEVI (306 aa)) constitute a Protein kinase domain. S652 is subject to Phosphoserine.

This sequence belongs to the protein kinase superfamily. Ser/Thr protein kinase family. In terms of assembly, homodimer. Interacts with MIK1, MIK2 and LURE1.2. LURE1.2 enhances the heterodimerization of MDIS1 with MIK1 or MIK2. In terms of processing, phosphorylated by MIK1. As to expression, expressed in pollen tubes and seedlings.

The protein localises to the cell membrane. It is found in the endomembrane system. It carries out the reaction L-seryl-[protein] + ATP = O-phospho-L-seryl-[protein] + ADP + H(+). The catalysed reaction is L-threonyl-[protein] + ATP = O-phospho-L-threonyl-[protein] + ADP + H(+). In terms of biological role, involved in the pollen tube perception of the female signal. The polypeptide is Protein MALE DISCOVERER 1 (Arabidopsis thaliana (Mouse-ear cress)).